The primary structure comprises 137 residues: Large ribosomal subunit protein uL16 (137 aa).

Basic residues predominate over residues 1–19; that stretch reads MLSPKKVKFRKQQRGRRTG. A disordered region spans residues 1–20; sequence MLSPKKVKFRKQQRGRRTGT.

The protein belongs to the universal ribosomal protein uL16 family. As to quaternary structure, part of the 50S ribosomal subunit.

Binds 23S rRNA and is also seen to make contacts with the A and possibly P site tRNAs. The chain is Large ribosomal subunit protein uL16 from Desulfosudis oleivorans (strain DSM 6200 / JCM 39069 / Hxd3) (Desulfococcus oleovorans).